Here is a 311-residue protein sequence, read N- to C-terminus: tRNA-cytidine(32) 2-sulfurtransferase (311 aa).

The PP-loop motif motif lies at 47–52 (SGGKDS). Residues Cys-122, Cys-125, and Cys-213 each coordinate [4Fe-4S] cluster.

It belongs to the TtcA family. In terms of assembly, homodimer. It depends on Mg(2+) as a cofactor. [4Fe-4S] cluster is required as a cofactor.

It localises to the cytoplasm. It carries out the reaction cytidine(32) in tRNA + S-sulfanyl-L-cysteinyl-[cysteine desulfurase] + AH2 + ATP = 2-thiocytidine(32) in tRNA + L-cysteinyl-[cysteine desulfurase] + A + AMP + diphosphate + H(+). It participates in tRNA modification. Functionally, catalyzes the ATP-dependent 2-thiolation of cytidine in position 32 of tRNA, to form 2-thiocytidine (s(2)C32). The sulfur atoms are provided by the cysteine/cysteine desulfurase (IscS) system. This chain is tRNA-cytidine(32) 2-sulfurtransferase, found in Shigella boydii serotype 18 (strain CDC 3083-94 / BS512).